Consider the following 344-residue polypeptide: L-rhamnose-proton symporter (344 aa).

Helical transmembrane passes span 4-24 (AITM…CFYA), 38-58 (WSIG…ALLL), 68-88 (FNLS…IGNI), 101-121 (MGIG…TPII), 137-157 (TLLG…AGQL), 175-195 (LLLA…MNAA), 214-234 (LPSY…FCFV), 259-279 (ILLS…YAWG), 290-310 (ISWM…GLVL), and 323-343 (VLSL…MGMA).

The protein belongs to the L-rhamnose transporter (TC 2.A.7.6) family.

It localises to the cell inner membrane. It catalyses the reaction L-rhamnopyranose(in) + H(+)(in) = L-rhamnopyranose(out) + H(+)(out). Uptake of L-rhamnose across the cytoplasmic membrane with the concomitant transport of protons into the cell (symport system). The protein is L-rhamnose-proton symporter of Citrobacter koseri (strain ATCC BAA-895 / CDC 4225-83 / SGSC4696).